Reading from the N-terminus, the 203-residue chain is High-molecular weight cobalt-containing nitrile hydratase subunit alpha (203 aa).

Co(3+) is bound by residues C102, C105, S106, and C107.

The protein belongs to the nitrile hydratase subunit alpha family. In terms of assembly, heterodimer of an alpha and a beta chain. Requires Co(3+) as cofactor.

The catalysed reaction is an aliphatic primary amide = an aliphatic nitrile + H2O. Its function is as follows. NHase catalyzes the hydration of various nitrile compounds to the corresponding amides. In Rhodococcus rhodochrous, this protein is High-molecular weight cobalt-containing nitrile hydratase subunit alpha (nhhA).